A 381-amino-acid chain; its full sequence is Metallophosphoesterase 1 (381 aa).

The helical transmembrane segment at 15 to 35 (LIFAFVSVFVFCEYVIYYLVI) threads the bilayer. A divalent metal cation is bound by residues D59, D101, N139, H234, H288, and H290. Residues 341-361 (TVLVVYCSSCLIIALITLIHL) form a helical membrane-spanning segment. The Di-lysine motif signature appears at 377–381 (KHKTL).

It belongs to the metallophosphoesterase superfamily. MPPE1 family. The cofactor is Mn(2+).

It localises to the endoplasmic reticulum-Golgi intermediate compartment membrane. Metallophosphoesterase that catalyzes the removal of a side-chain ethanolamine-phosphate (EtNP) from the second mannose of the GPI-anchor protein intermediate. Participates in the glycan remodeling steps of GPI-anchor maturation to allow an efficient transport of GPI-anchor proteins from the endoplasmic reticulum to the Golgi. This is Metallophosphoesterase 1 from Danio rerio (Zebrafish).